The primary structure comprises 426 residues: Glutamate-1-semialdehyde 2,1-aminomutase (426 aa).

Lys265 bears the N6-(pyridoxal phosphate)lysine mark.

The protein belongs to the class-III pyridoxal-phosphate-dependent aminotransferase family. HemL subfamily. As to quaternary structure, homodimer. It depends on pyridoxal 5'-phosphate as a cofactor.

The protein localises to the cytoplasm. It catalyses the reaction (S)-4-amino-5-oxopentanoate = 5-aminolevulinate. It functions in the pathway porphyrin-containing compound metabolism; protoporphyrin-IX biosynthesis; 5-aminolevulinate from L-glutamyl-tRNA(Glu): step 2/2. The sequence is that of Glutamate-1-semialdehyde 2,1-aminomutase from Neisseria gonorrhoeae (strain ATCC 700825 / FA 1090).